The following is a 391-amino-acid chain: Elongation factor Tu (391 aa).

Positions 10 to 201 (KPHVNIGTIG…AVDDYIPTPE (192 aa)) constitute a tr-type G domain. The interval 19-26 (GHVDHGKT) is G1. GTP is bound at residue 19–26 (GHVDHGKT). Position 26 (T26) interacts with Mg(2+). Residues 55 to 59 (GITIS) form a G2 region. A G3 region spans residues 76-79 (DCPG). Residues 76–80 (DCPGH) and 131–134 (NKVD) each bind GTP. A G4 region spans residues 131-134 (NKVD). The interval 169-171 (SAL) is G5.

Belongs to the TRAFAC class translation factor GTPase superfamily. Classic translation factor GTPase family. EF-Tu/EF-1A subfamily. Monomer.

Its subcellular location is the cytoplasm. The catalysed reaction is GTP + H2O = GDP + phosphate + H(+). Its function is as follows. GTP hydrolase that promotes the GTP-dependent binding of aminoacyl-tRNA to the A-site of ribosomes during protein biosynthesis. The protein is Elongation factor Tu of Paracoccus denitrificans (strain Pd 1222).